Reading from the N-terminus, the 156-residue chain is ATP synthase subunit b (156 aa).

The chain crosses the membrane as a helical span at residues 7–27 (LIGQTVAFIIFVWFCMKFVWP).

This sequence belongs to the ATPase B chain family. In terms of assembly, F-type ATPases have 2 components, F(1) - the catalytic core - and F(0) - the membrane proton channel. F(1) has five subunits: alpha(3), beta(3), gamma(1), delta(1), epsilon(1). F(0) has three main subunits: a(1), b(2) and c(10-14). The alpha and beta chains form an alternating ring which encloses part of the gamma chain. F(1) is attached to F(0) by a central stalk formed by the gamma and epsilon chains, while a peripheral stalk is formed by the delta and b chains.

Its subcellular location is the cell inner membrane. F(1)F(0) ATP synthase produces ATP from ADP in the presence of a proton or sodium gradient. F-type ATPases consist of two structural domains, F(1) containing the extramembraneous catalytic core and F(0) containing the membrane proton channel, linked together by a central stalk and a peripheral stalk. During catalysis, ATP synthesis in the catalytic domain of F(1) is coupled via a rotary mechanism of the central stalk subunits to proton translocation. In terms of biological role, component of the F(0) channel, it forms part of the peripheral stalk, linking F(1) to F(0). This Shewanella sp. (strain ANA-3) protein is ATP synthase subunit b.